Reading from the N-terminus, the 88-residue chain is Bombyxin B-8 (88 aa).

An N-terminal signal peptide occupies residues 1–18 (MKTSVIFVLIVLNLMWSG). 3 disulfides stabilise this stretch: cysteine 28–cysteine 74, cysteine 40–cysteine 87, and cysteine 73–cysteine 78. A propeptide spans 47–65 (GGAQYAPYFWQKAYLGSRG) (c peptide like).

This sequence belongs to the insulin family. As to quaternary structure, heterodimer of a B chain and an A chain linked by two disulfide bonds.

It localises to the secreted. Brain peptide responsible for activation of prothoracic glands to produce ecdysone in insects. This chain is Bombyxin B-8 (BBXB8), found in Bombyx mori (Silk moth).